A 318-amino-acid polypeptide reads, in one-letter code: MRHLLSTRDLSRDEAVHILDVAEDMADVGTREIKKTPALRGRTVVNLFFEDSTRTRISFEAAAKRLSADVINFSAKGSSVSKGESLKDTAQTLQAMGADGVVVRHPSSGAPHTLAGSGWIDAGIVNAGDGTHEHPTQALLDAFTIRRRLHGTAARGKGLDGTRVVIVGDVLHSRVARSNAWLLTTLGAEVTLVAPPTLVPVGVGSWPVTVRYDLDAALAEGKPDAVMMLRIQAERMRAAFFPNPCEYARIWGLDDARLALLGPDTIVMHPGPMNRGLEISAAAADSERSTVREQVANGVSVRMAVLYLLLSGDGKADR.

Positions 54 and 55 each coordinate carbamoyl phosphate. Residue Lys-82 coordinates L-aspartate. Carbamoyl phosphate-binding residues include Arg-104, His-134, and Gln-137. Arg-174 and Arg-230 together coordinate L-aspartate. Carbamoyl phosphate-binding residues include Gly-271 and Pro-272.

This sequence belongs to the aspartate/ornithine carbamoyltransferase superfamily. ATCase family. Heterododecamer (2C3:3R2) of six catalytic PyrB chains organized as two trimers (C3), and six regulatory PyrI chains organized as three dimers (R2).

The catalysed reaction is carbamoyl phosphate + L-aspartate = N-carbamoyl-L-aspartate + phosphate + H(+). It functions in the pathway pyrimidine metabolism; UMP biosynthesis via de novo pathway; (S)-dihydroorotate from bicarbonate: step 2/3. Functionally, catalyzes the condensation of carbamoyl phosphate and aspartate to form carbamoyl aspartate and inorganic phosphate, the committed step in the de novo pyrimidine nucleotide biosynthesis pathway. The polypeptide is Aspartate carbamoyltransferase catalytic subunit (Clavibacter michiganensis subsp. michiganensis (strain NCPPB 382)).